Here is a 764-residue protein sequence, read N- to C-terminus: Probable 5-methyltetrahydropteroyltriglutamate--homocysteine methyltransferase (764 aa).

Lysine 19 and asparagine 126 together coordinate 5-methyltetrahydropteroyltri-L-glutamate. Serine 182 is modified (phosphoserine). Phosphothreonine is present on threonine 441. L-homocysteine is bound by residues 442–444 (IGS) and glutamate 495. Residues 442–444 (IGS) and glutamate 495 each bind L-methionine. Residues aspartate 500, tyrosine 523, 526-527 (RC), and tryptophan 572 each bind 5-methyltetrahydropteroyltri-L-glutamate. Aspartate 610 serves as a coordination point for L-homocysteine. Position 610 (aspartate 610) interacts with L-methionine. Zn(2+) contacts are provided by histidine 652, cysteine 654, and glutamate 676. The active-site Proton donor is the histidine 703. Cysteine 735 contributes to the Zn(2+) binding site.

Belongs to the vitamin-B12 independent methionine synthase family. The cofactor is Zn(2+).

Its subcellular location is the nucleus. The protein localises to the cytoplasm. The catalysed reaction is 5-methyltetrahydropteroyltri-L-glutamate + L-homocysteine = tetrahydropteroyltri-L-glutamate + L-methionine. It participates in amino-acid biosynthesis; L-methionine biosynthesis via de novo pathway; L-methionine from L-homocysteine (MetE route): step 1/1. Its function is as follows. Catalyzes the transfer of a methyl group from 5-methyltetrahydrofolate to homocysteine resulting in methionine formation. This chain is Probable 5-methyltetrahydropteroyltriglutamate--homocysteine methyltransferase (met26), found in Schizosaccharomyces pombe (strain 972 / ATCC 24843) (Fission yeast).